The chain runs to 194 residues: Lipoprotein signal peptidase (194 aa).

2 helical membrane-spanning segments follow: residues 75-95 and 97-117; these read TIFLITNMIIVCYLYYLMICS and TIGSFAGYSFVIGGAIGNLID. Active-site residues include Asp126 and Asp144. Residues 135–155 form a helical membrane-spanning segment; the sequence is YSFPVFNLADCFITLGVIILM.

It belongs to the peptidase A8 family.

It is found in the cell inner membrane. The catalysed reaction is Release of signal peptides from bacterial membrane prolipoproteins. Hydrolyzes -Xaa-Yaa-Zaa-|-(S,diacylglyceryl)Cys-, in which Xaa is hydrophobic (preferably Leu), and Yaa (Ala or Ser) and Zaa (Gly or Ala) have small, neutral side chains.. It functions in the pathway protein modification; lipoprotein biosynthesis (signal peptide cleavage). Functionally, this protein specifically catalyzes the removal of signal peptides from prolipoproteins. The chain is Lipoprotein signal peptidase from Rickettsia prowazekii (strain Madrid E).